A 94-amino-acid chain; its full sequence is Large ribosomal subunit protein bL25 (94 aa).

This sequence belongs to the bacterial ribosomal protein bL25 family. Part of the 50S ribosomal subunit; part of the 5S rRNA/L5/L18/L25 subcomplex. Contacts the 5S rRNA. Binds to the 5S rRNA independently of L5 and L18.

This is one of the proteins that binds to the 5S RNA in the ribosome where it forms part of the central protuberance. The protein is Large ribosomal subunit protein bL25 of Klebsiella pneumoniae subsp. pneumoniae (strain ATCC 700721 / MGH 78578).